The chain runs to 297 residues: Protein-L-isoaspartate O-methyltransferase (297 aa).

Residues 20–57 (RKPAPARTAGMPAVGAPGPAQAQAKARDKQPSAPTAAA) are disordered. The segment covering 28 to 43 (AGMPAVGAPGPAQAQA) has biased composition (low complexity). Ser133 is a catalytic residue.

The protein belongs to the methyltransferase superfamily. L-isoaspartyl/D-aspartyl protein methyltransferase family.

It localises to the cytoplasm. The catalysed reaction is [protein]-L-isoaspartate + S-adenosyl-L-methionine = [protein]-L-isoaspartate alpha-methyl ester + S-adenosyl-L-homocysteine. Catalyzes the methyl esterification of L-isoaspartyl residues in peptides and proteins that result from spontaneous decomposition of normal L-aspartyl and L-asparaginyl residues. It plays a role in the repair and/or degradation of damaged proteins. This chain is Protein-L-isoaspartate O-methyltransferase, found in Cupriavidus pinatubonensis (strain JMP 134 / LMG 1197) (Cupriavidus necator (strain JMP 134)).